Reading from the N-terminus, the 396-residue chain is Elongation factor Tu (396 aa).

Residues 10–206 (KPHVNVGTIG…ALDSYIPEPT (197 aa)) enclose the tr-type G domain. Residues 19–26 (GHVDHGKT) form a G1 region. 19–26 (GHVDHGKT) is a binding site for GTP. Residue Thr26 participates in Mg(2+) binding. Residues 60 to 64 (GITIS) are G2. The tract at residues 81 to 84 (DCPG) is G3. GTP is bound by residues 81–85 (DCPGH) and 136–139 (NKAD). The segment at 136–139 (NKAD) is G4. The segment at 174–176 (SAL) is G5.

This sequence belongs to the TRAFAC class translation factor GTPase superfamily. Classic translation factor GTPase family. EF-Tu/EF-1A subfamily. Monomer.

It is found in the cytoplasm. The catalysed reaction is GTP + H2O = GDP + phosphate + H(+). Its function is as follows. GTP hydrolase that promotes the GTP-dependent binding of aminoacyl-tRNA to the A-site of ribosomes during protein biosynthesis. This is Elongation factor Tu from Hydrogenovibrio crunogenus (strain DSM 25203 / XCL-2) (Thiomicrospira crunogena).